A 369-amino-acid chain; its full sequence is Peptide chain release factor 2 (369 aa).

An N5-methylglutamine modification is found at Q251.

The protein belongs to the prokaryotic/mitochondrial release factor family. Methylated by PrmC. Methylation increases the termination efficiency of RF2.

It is found in the cytoplasm. In terms of biological role, peptide chain release factor 2 directs the termination of translation in response to the peptide chain termination codons UGA and UAA. The sequence is that of Peptide chain release factor 2 from Acidothermus cellulolyticus (strain ATCC 43068 / DSM 8971 / 11B).